We begin with the raw amino-acid sequence, 191 residues long: MIRITDAAQEHFLKLLAKQEEGTQIRVFVINPGTPNAECGVSYCPPDAVEASDTVLKFEKISAYVDELSAPYLEDAEIDFVTDQLGSQLTLKAPNAKMRKVDDSAPLMERVEYVLQSQINPQLAGHGGRVTLMEITDDGMAILQFGGGCNGCSMVDYTLKEGIEKELLEKFPELKGVRDLTEHQRGEHSYY.

[4Fe-4S] cluster-binding residues include C149 and C152.

Belongs to the NfuA family. Homodimer. Requires [4Fe-4S] cluster as cofactor.

In terms of biological role, involved in iron-sulfur cluster biogenesis. Binds a 4Fe-4S cluster, can transfer this cluster to apoproteins, and thereby intervenes in the maturation of Fe/S proteins. Could also act as a scaffold/chaperone for damaged Fe/S proteins. The sequence is that of Fe/S biogenesis protein NfuA from Pectobacterium carotovorum subsp. carotovorum (strain PC1).